Reading from the N-terminus, the 535-residue chain is EH domain-containing protein 3 (535 aa).

Met-1 bears the N-acetylmethionine mark. Residues 55–286 (FDNKPMVLLV…DLFRDIQSLP (232 aa)) enclose the Dynamin-type G domain. The interval 65 to 72 (GQYSTGKT) is G1 motif. 65 to 72 (GQYSTGKT) provides a ligand contact to ATP. Residues 91-92 (EP) are G2 motif. Positions 153-156 (DTPG) are G3 motif. Residues 198–227 (DEFSEVIKALKNHEDKMRVVLNKADQIETQ) are a coiled coil. Residues 219–222 (NKAD) form a G4 motif region. Lys-220 contributes to the ATP binding site. Residue Ile-243 is a region of interest, G5 motif. Position 258 (Trp-258) interacts with ATP. Lys-315 is covalently cross-linked (Glycyl lysine isopeptide (Lys-Gly) (interchain with G-Cter in SUMO)). Ser-349 and Ser-456 each carry phosphoserine. Residues 444–532 (DKPMYDEIFY…AHLLPPSKRK (89 aa)) form the EH domain. Residues 476-511 (LPNSVLGKIWKLADIDKDGMLDDEEFALANHLIKVK) form the EF-hand domain. The Ca(2+) site is built by Asp-489, Asp-491, Asp-493, Met-495, and Glu-500. Lys-511 participates in a covalent cross-link: Glycyl lysine isopeptide (Lys-Gly) (interchain with G-Cter in SUMO).

Belongs to the TRAFAC class dynamin-like GTPase superfamily. Dynamin/Fzo/YdjA family. EHD subfamily. Homooligomer. Heterooligomer with EHD1. Heterooligomer with EHD2 and EHD4; ATP-binding is required for heterooligomerization. Interacts with PACSIN1. Interacts with PACSIN2. Interacts (via EH domain) with MICALL1. Interacts (via EH domain) with RAB11FIP2. Interacts with ANK2. Interacts with CACNA1GG and CACNA1H. As to expression, strong expression seen in the kidney, brain and liver. In the kidney, expressed exclusively by glomerular endothelial cells; at protein level. Expressed in skeletal muscle neuromuscular junction perisynaptic region; at protein level.

Its subcellular location is the recycling endosome membrane. It is found in the cell membrane. The protein localises to the cell projection. The protein resides in the cilium membrane. It localises to the cytoplasmic vesicle. ATP- and membrane-binding protein that controls membrane reorganization/tubulation upon ATP hydrolysis. In vitro causes tubulation of endocytic membranes. Binding to phosphatidic acid induces its membrane tubulation activity. Plays a role in endocytic transport. Involved in early endosome to recycling endosome compartment (ERC), retrograde early endosome to Golgi, and endosome to plasma membrane (rapid recycling) protein transport. Involved in the regulation of Golgi maintenance and morphology. Involved in the recycling of internalized D1 dopamine receptor. Plays a role in cardiac protein trafficking probably implicating ANK2. Involved in the ventricular membrane targeting of SLC8A1 and CACNA1C and probably the atrial membrane localization of CACNA1GG and CACNA1H implicated in the regulation of atrial myocyte excitability and cardiac conduction. In conjunction with EHD4 may be involved in endocytic trafficking of KDR/VEGFR2 implicated in control of glomerular function. Involved in the rapid recycling of integrin beta-3 implicated in cell adhesion maintenance. Involved in the unidirectional retrograde dendritic transport of endocytosed BACE1 and in efficient sorting of BACE1 to axons implicating a function in neuronal APP processing. Plays a role in the formation of the ciliary vesicle, an early step in cilium biogenesis; possibly sharing redundant functions with Ehd1. The chain is EH domain-containing protein 3 from Mus musculus (Mouse).